Reading from the N-terminus, the 161-residue chain is Small heat shock protein hspJ (161 aa).

A sHSP domain is found at 52–161; the sequence is SKFTSLNPKL…FEKEIKINIE (110 aa).

Belongs to the small heat shock protein (HSP20) family.

In Dictyostelium discoideum (Social amoeba), this protein is Small heat shock protein hspJ (hspJ).